Reading from the N-terminus, the 337-residue chain is UDP-3-O-acylglucosamine N-acyltransferase 1 (337 aa).

His238 (proton acceptor) is an active-site residue.

Belongs to the transferase hexapeptide repeat family. LpxD subfamily. As to quaternary structure, homotrimer.

The catalysed reaction is a UDP-3-O-[(3R)-3-hydroxyacyl]-alpha-D-glucosamine + a (3R)-hydroxyacyl-[ACP] = a UDP-2-N,3-O-bis[(3R)-3-hydroxyacyl]-alpha-D-glucosamine + holo-[ACP] + H(+). The protein operates within bacterial outer membrane biogenesis; LPS lipid A biosynthesis. In terms of biological role, catalyzes the N-acylation of UDP-3-O-acylglucosamine using 3-hydroxyacyl-ACP as the acyl donor. Is involved in the biosynthesis of lipid A, a phosphorylated glycolipid that anchors the lipopolysaccharide to the outer membrane of the cell. The protein is UDP-3-O-acylglucosamine N-acyltransferase 1 of Koribacter versatilis (strain Ellin345).